We begin with the raw amino-acid sequence, 159 residues long: NADH-quinone oxidoreductase subunit I (159 aa).

4Fe-4S ferredoxin-type domains follow at residues 50–80 (QRRYPNGEERCIACKLCEAVCPAMAINIESE) and 90–119 (KRYDIDLTKCIFCGFCEEACPTDAIVETHI). Residues cysteine 60, cysteine 63, cysteine 66, cysteine 70, cysteine 99, cysteine 102, cysteine 105, and cysteine 109 each contribute to the [4Fe-4S] cluster site.

Belongs to the complex I 23 kDa subunit family. NDH-1 is composed of 14 different subunits. Subunits NuoA, H, J, K, L, M, N constitute the membrane sector of the complex. The cofactor is [4Fe-4S] cluster.

The protein localises to the cell inner membrane. The enzyme catalyses a quinone + NADH + 5 H(+)(in) = a quinol + NAD(+) + 4 H(+)(out). Its function is as follows. NDH-1 shuttles electrons from NADH, via FMN and iron-sulfur (Fe-S) centers, to quinones in the respiratory chain. The immediate electron acceptor for the enzyme in this species is believed to be ubiquinone. Couples the redox reaction to proton translocation (for every two electrons transferred, four hydrogen ions are translocated across the cytoplasmic membrane), and thus conserves the redox energy in a proton gradient. The sequence is that of NADH-quinone oxidoreductase subunit I from Neisseria meningitidis serogroup A / serotype 4A (strain DSM 15465 / Z2491).